A 270-amino-acid polypeptide reads, in one-letter code: Regulatory protein RecX (270 aa).

It belongs to the RecX family.

Its subcellular location is the cytoplasm. Its function is as follows. Modulates RecA activity. This is Regulatory protein RecX from Bacillus cytotoxicus (strain DSM 22905 / CIP 110041 / 391-98 / NVH 391-98).